Here is a 156-residue protein sequence, read N- to C-terminus: Arginine repressor (156 aa).

The protein belongs to the ArgR family.

It is found in the cytoplasm. The protein operates within amino-acid biosynthesis; L-arginine biosynthesis [regulation]. Its function is as follows. Regulates arginine biosynthesis genes. The sequence is that of Arginine repressor from Vibrio campbellii (strain ATCC BAA-1116).